The following is a 77-amino-acid chain: MKLIIFTGLVLFAIVSLIEVQADNERACLPQYQVCTEAPGNCCSNLVCDCYGRYKSGARIGRNCFCLQKGVIYKREN.

An N-terminal signal peptide occupies residues 1–20; sequence MKLIIFTGLVLFAIVSLIEV. A propeptide spanning residues 21-26 is cleaved from the precursor; the sequence is QADNER.

Belongs to the neurotoxin 19 (CSTX) family. 08 (U8-Lctx) subfamily. Post-translationally, contains 4 disulfide bonds. In terms of tissue distribution, expressed by the venom gland.

It is found in the secreted. This is U8-lycotoxin-Ls1i from Lycosa singoriensis (Wolf spider).